A 387-amino-acid polypeptide reads, in one-letter code: Gamma-butyrobetaine dioxygenase (387 aa).

Residues C38, C40, C43, and H82 each coordinate Zn(2+). Fe cation is bound by residues H202, D204, and H347. The residue at position 351 (S351) is a Phosphoserine.

It belongs to the gamma-BBH/TMLD family. Requires Fe(2+) as cofactor. L-ascorbate serves as cofactor. In terms of tissue distribution, expressed in the liver and in some extend in the testis and the epididymis.

The protein localises to the cytoplasm. The catalysed reaction is 4-(trimethylamino)butanoate + 2-oxoglutarate + O2 = carnitine + succinate + CO2. The protein operates within amine and polyamine biosynthesis; carnitine biosynthesis. Functionally, catalyzes the formation of L-carnitine from gamma-butyrobetaine. This Rattus norvegicus (Rat) protein is Gamma-butyrobetaine dioxygenase (Bbox1).